Consider the following 261-residue polypeptide: Cytochrome c oxidase subunit 3 (261 aa).

The Mitochondrial matrix portion of the chain corresponds to 1–15 (MTKQMHAFHMVNPSP). The helical transmembrane segment at 16–34 (WPLTGAASAFMLTSGLAMW) threads the bilayer. Residues 35-40 (FHKHSN) lie on the Mitochondrial intermembrane side of the membrane. Residues 41–66 (TLIFLSMILMLLTMYQWWRDITREGT) traverse the membrane as a helical segment. The Mitochondrial matrix segment spans residues 67–72 (FQGHHT). A helical transmembrane segment spans residues 73-105 (SLVQKSLRYGMILFIVSEVCFFFGFFWTFYHSS). Over 106–128 (LSPSPDLGMMWPPKGVIPLDPFE) the chain is Mitochondrial intermembrane. Residues 129-152 (IPLLNTAILLGSGVSVTWAHHSLM) traverse the membrane as a helical segment. The Mitochondrial matrix portion of the chain corresponds to 153–155 (EKT). Residues 156-183 (HKDMVISLSITIILGIYFTLLQGMEYFN) traverse the membrane as a helical segment. Topologically, residues 184–190 (STFNISD) are mitochondrial intermembrane. Residues 191-223 (NAYGSTFFVATGFHGGHVIIGTLFLTVCLLRQL) traverse the membrane as a helical segment. At 224–232 (MFHFTSSHH) the chain is on the mitochondrial matrix side. The helical transmembrane segment at 233-256 (FGFEAAAWYWHFVDVVWLFLFISI) threads the bilayer. The Mitochondrial intermembrane segment spans residues 257–261 (YWWGS).

This sequence belongs to the cytochrome c oxidase subunit 3 family. Component of the cytochrome c oxidase (complex IV, CIV), a multisubunit enzyme composed of 14 subunits. The complex is composed of a catalytic core of 3 subunits MT-CO1, MT-CO2 and MT-CO3, encoded in the mitochondrial DNA, and 11 supernumerary subunits COX4I, COX5A, COX5B, COX6A, COX6B, COX6C, COX7A, COX7B, COX7C, COX8 and NDUFA4, which are encoded in the nuclear genome. The complex exists as a monomer or a dimer and forms supercomplexes (SCs) in the inner mitochondrial membrane with NADH-ubiquinone oxidoreductase (complex I, CI) and ubiquinol-cytochrome c oxidoreductase (cytochrome b-c1 complex, complex III, CIII), resulting in different assemblies (supercomplex SCI(1)III(2)IV(1) and megacomplex MCI(2)III(2)IV(2)).

Its subcellular location is the mitochondrion inner membrane. The catalysed reaction is 4 Fe(II)-[cytochrome c] + O2 + 8 H(+)(in) = 4 Fe(III)-[cytochrome c] + 2 H2O + 4 H(+)(out). Functionally, component of the cytochrome c oxidase, the last enzyme in the mitochondrial electron transport chain which drives oxidative phosphorylation. The respiratory chain contains 3 multisubunit complexes succinate dehydrogenase (complex II, CII), ubiquinol-cytochrome c oxidoreductase (cytochrome b-c1 complex, complex III, CIII) and cytochrome c oxidase (complex IV, CIV), that cooperate to transfer electrons derived from NADH and succinate to molecular oxygen, creating an electrochemical gradient over the inner membrane that drives transmembrane transport and the ATP synthase. Cytochrome c oxidase is the component of the respiratory chain that catalyzes the reduction of oxygen to water. Electrons originating from reduced cytochrome c in the intermembrane space (IMS) are transferred via the dinuclear copper A center (CU(A)) of subunit 2 and heme A of subunit 1 to the active site in subunit 1, a binuclear center (BNC) formed by heme A3 and copper B (CU(B)). The BNC reduces molecular oxygen to 2 water molecules using 4 electrons from cytochrome c in the IMS and 4 protons from the mitochondrial matrix. This is Cytochrome c oxidase subunit 3 (MT-CO3) from Myxine glutinosa (Atlantic hagfish).